We begin with the raw amino-acid sequence, 1146 residues long: ATP-dependent helicase/deoxyribonuclease subunit B (1146 aa).

A UvrD-like helicase ATP-binding domain is found at 1–280 (MSLRFIYGRA…LNSKPLFRFS (280 aa)). 8–15 (GRAGSGKT) contacts ATP. The UvrD-like helicase C-terminal domain maps to 276-584 (LFRFSQSPEL…LVGSLERSRS (309 aa)). [4Fe-4S] cluster-binding residues include Cys-786, Cys-1105, Cys-1108, and Cys-1114.

Belongs to the helicase family. AddB/RexB type 1 subfamily. As to quaternary structure, heterodimer of AddA and AddB. Requires Mg(2+) as cofactor. [4Fe-4S] cluster serves as cofactor.

The heterodimer acts as both an ATP-dependent DNA helicase and an ATP-dependent, dual-direction single-stranded exonuclease. Recognizes the chi site generating a DNA molecule suitable for the initiation of homologous recombination. The AddB subunit has 5' -&gt; 3' nuclease activity but not helicase activity. This Acetivibrio thermocellus (strain ATCC 27405 / DSM 1237 / JCM 9322 / NBRC 103400 / NCIMB 10682 / NRRL B-4536 / VPI 7372) (Clostridium thermocellum) protein is ATP-dependent helicase/deoxyribonuclease subunit B.